A 421-amino-acid chain; its full sequence is MSNPNEPARALLPYLQRADELQKHEPLVAYYCRLYAMERGLKIPQSERTKTTNSILMSLINQLEKDKKSLTLSPDDNMHVEGFALSVFAKADKQDRAGRADLGTAKTFYAASIFFEILSQFGPVPPDIEQKHKYAAWKAADIRKAIKEGRKPTPGDPVDDDTDLSIPSSGPSGSYDHSASDTNTTSHHRTELDPPHDSNDDSSHHQFPEVPQHPLPPRFYDNPTNDYPADVPPPPPSSYPSNDHLPPPTGPSDSPYPHPYSHQPYHQDPPKHMPPPQNYSSHEPSPNSLPNFQSYPSFSESSLPSTSPHYPSHYQNPEPYYSSPHSAPAPSSTSFSSAPPPPPYSSNGRINIAPVLDPAPSSAQKYHYDSSYQPGPEKVAEALKAARFAVGALAFDEVSTAVEHLKKSLELLTNPSAGAGH.

Position 2 is an N-acetylserine (serine 2). Positions 146 to 374 (IKEGRKPTPG…KYHYDSSYQP (229 aa)) are disordered. Residues 165–185 (SIPSSGPSGSYDHSASDTNTT) are compositionally biased toward polar residues. The span at 188–207 (HRTELDPPHDSNDDSSHHQF) shows a compositional bias: basic and acidic residues. Residues 245 to 258 (LPPPTGPSDSPYPH) show a composition bias toward pro residues. Over residues 278 to 293 (NYSSHEPSPNSLPNFQ) the composition is skewed to polar residues. 2 stretches are compositionally biased toward low complexity: residues 294–308 (SYPS…STSP) and 317–337 (PEPY…SFSS).

This sequence belongs to the VTA1 family. In terms of assembly, homodimer. Interacts with SKD1/VPS4, VPS60-1, CHMP1A and CHMP1B. Binds to PROS/At4g24370. Interacts with MPK6 and MPK3. Post-translationally, phosphorylated by activated MPK6 and MPK3, this activation is required to trigger multivesicular bodies (MVBs) trafficking upon plant infection.

Its subcellular location is the cytoplasm. The protein resides in the endosome membrane. It is found in the nucleus. It localises to the endosome. The protein localises to the multivesicular body. Involved in the endosomal multivesicular bodies (MVB) pathway. MVBs contain intraluminal vesicles (ILVs) that are generated by invagination and scission from the limiting membrane of the endosome and are delivered to lysosomes enabling degradation of membrane proteins. Thought to be a cofactor of SKD1/VPS4, which catalyzes the disassembly of membrane-associated ESCRT-III. Target of pathogen-responsive mitogen-activated protein kinases (MPKs) that plays a critical role in plant basal resistance to Pseudomonas syringae in a SKD1-dependent manner by promoting multivesicular bodies (MVBs) trafficking upon plant infection. In Arabidopsis thaliana (Mouse-ear cress), this protein is Protein HOMOLOG OF MAMMALIAN LYST-INTERACTING PROTEIN 5.